Reading from the N-terminus, the 325-residue chain is MAQFNKNQLIACRRNGTTTSDFNQTEVAEFFLMGFSNSWDIQIVHAALFFLVYLAAVIGNLLIIILTTLDVHLQTPMYFFLRNLSFLDFCYISVTIPKSIVSSLTHDTSISFFGCALQAFFFMDLATTEVAILTVMSYDRYMAICRPLHYEVIINQGVCLRMMAMSWLSGVICGFMHVIATFSLPFCGRNRIRQFFCNIPQLLSLLDPKVITIEIGVMVFGTSLVIISFVVITLSYMYIFSVIMRIPSKEGRSKTFSTCIPHLVVVTLFMISGSIAYVKPISNSPPVLDVFLSAFYTVVPPTLNPVIYSLRNRDMKAALRRQCGP.

Over 1-43 (MAQFNKNQLIACRRNGTTTSDFNQTEVAEFFLMGFSNSWDIQI) the chain is Extracellular. A helical transmembrane segment spans residues 44-64 (VHAALFFLVYLAAVIGNLLII). Over 65–72 (ILTTLDVH) the chain is Cytoplasmic. The helical transmembrane segment at 73–93 (LQTPMYFFLRNLSFLDFCYIS) threads the bilayer. Topologically, residues 94-117 (VTIPKSIVSSLTHDTSISFFGCAL) are extracellular. The chain crosses the membrane as a helical span at residues 118–138 (QAFFFMDLATTEVAILTVMSY). At 139-151 (DRYMAICRPLHYE) the chain is on the cytoplasmic side. Residues 152–172 (VIINQGVCLRMMAMSWLSGVI) traverse the membrane as a helical segment. Over 173–214 (CGFMHVIATFSLPFCGRNRIRQFFCNIPQLLSLLDPKVITIE) the chain is Extracellular. A helical membrane pass occupies residues 215–235 (IGVMVFGTSLVIISFVVITLS). At 236–255 (YMYIFSVIMRIPSKEGRSKT) the chain is on the cytoplasmic side. Residues 256–276 (FSTCIPHLVVVTLFMISGSIA) traverse the membrane as a helical segment. At 277–289 (YVKPISNSPPVLD) the chain is on the extracellular side. The helical transmembrane segment at 290–310 (VFLSAFYTVVPPTLNPVIYSL) threads the bilayer. Over 311-325 (RNRDMKAALRRQCGP) the chain is Cytoplasmic.

Belongs to the G-protein coupled receptor 1 family.

It localises to the cell membrane. Its function is as follows. Odorant receptor. The protein is Olfactory receptor 14L1 of Homo sapiens (Human).